Reading from the N-terminus, the 556-residue chain is Phospholipase D (556 aa).

A signal peptide spans 1-47; it reads MTSDQRPARLPTHKGKLLAPHRLHRLIPVSVALTTVCAALPSSTAYA. One can recognise a PLD phosphodiesterase 1 domain in the interval 210–237; sequence SLSWNHSKLLVVDGKTAITGGINGWKDD. The tract at residues 326–360 is disordered; that stretch reads SDPSSGYHPDLPTAPDTKCTVGLHDNTNADRDYDT. The PLD phosphodiesterase 2 domain maps to 484 to 511; sequence KPYALHHKLVSVDDSAFYIGSKNLYPAW.

Belongs to the phospholipase D family. Probably has at least 1 disulfide bond.

The protein localises to the secreted. It catalyses the reaction a 1,2-diacyl-sn-glycero-3-phosphocholine + H2O = a 1,2-diacyl-sn-glycero-3-phosphate + choline + H(+). Inhibited by mercaptoethanol and dithiothreitol. Its function is as follows. A reversible phospholipase active on phosphatidylcholine (PC) and phosphatidylethanolamine. Lysophosphatidylcholine and egg sphingomyelin are hydrolyzed about 50 times and 100 times more slowly than PC, respectively. During the transphosphatidylation reaction straight-chain hydroxy compounds, such as triethyleneglycol and triethyleneglycol monomethyl ether, were phosphatidylated in good yield, as were monosaccharides. Disaccharides and sugar alcohol reacted slowly, while N-acetyl-D-galactosamine, D-galactosamine and D-galacturonic acid were not phosphatidylated. The chain is Phospholipase D from Streptomyces antibioticus.